A 385-amino-acid chain; its full sequence is MADSCRNLTYVRDSVGPATSTLMFVAGVVGNGLALGILGARRHSRPSAFAVLVTGLGVTDLLGTCFLSPAVFAAYARNSSLLGLARGRPALCDAFAFAMTFFGLASTLILFAMAVERCLALSHPYLYAQLDGPRRARLALPAIYAFCTIFCSLPFLGLGQHQQYCPGSWCFIRMRSAEPGGCAFLLAYASLVALLVAAIVLCNGSVTLSLCRMYRQQRRHQARCPRPRAGEDEVDHLILLALMTGIMAVCSLPLTPQIRGFTQAIAPDSSEMGDLLAFRFNAFNPILDPWVFILFRKSVFQRLKLWFCCLYSRPAQGDSRTSLSQSASGRKDSSAPPALEGKKGNWVPLSAWGEGQGGPLPAVQLPTSTVGTPSKAGSEAACSLC.

The Extracellular portion of the chain corresponds to methionine 1–glycine 16. 2 disulfides stabilise this stretch: cysteine 5–cysteine 165 and cysteine 92–cysteine 170. Residue asparagine 7 is glycosylated (N-linked (GlcNAc...) asparagine). A helical transmembrane segment spans residues proline 17 to leucine 38. Over glycine 39 to valine 51 the chain is Cytoplasmic. Residues leucine 52–alanine 76 traverse the membrane as a helical segment. The Extracellular segment spans residues arginine 77–alanine 94. A helical membrane pass occupies residues phenylalanine 95–valine 115. Residues glutamate 116–arginine 134 lie on the Cytoplasmic side of the membrane. The chain crosses the membrane as a helical span at residues arginine 135–leucine 158. Topologically, residues glycine 159 to glycine 181 are extracellular. The chain crosses the membrane as a helical span at residues cysteine 182–leucine 208. The Cytoplasmic segment spans residues serine 209 to valine 234. The chain crosses the membrane as a helical span at residues aspartate 235–arginine 259. Residues glycine 260–glycine 273 lie on the Extracellular side of the membrane. The helical transmembrane segment at aspartate 274–leucine 294 threads the bilayer. The Cytoplasmic segment spans residues phenylalanine 295 to cysteine 385. Positions alanine 315–glycine 344 are disordered. The segment covering aspartate 318–serine 328 has biased composition (polar residues). Cysteine 382 bears the Cysteine methyl ester mark. Cysteine 382 carries the S-farnesyl cysteine lipid modification. A propeptide spans serine 383–cysteine 385 (removed in mature form).

The protein belongs to the G-protein coupled receptor 1 family. As to quaternary structure, interacts (non-isoprenylated C-terminus) with PDZK1. Post-translationally, isoprenylation does not influence ligand binding but is required for efficient coupling to the effectors adenylyl cyclase and phospholipase C.

It localises to the cell membrane. Its function is as follows. Receptor for prostacyclin (prostaglandin I2 or PGI2). The activity of this receptor is mediated by G(s) proteins which activate adenylate cyclase. This chain is Prostacyclin receptor (PTGIR), found in Bos taurus (Bovine).